The following is a 100-amino-acid chain: Sec-independent protein translocase protein TatA (100 aa).

A helical transmembrane segment spans residues 1–21 (MGALRPWHIAVLVVVLILLFG). Residues 46 to 58 (LHDDDRDLAEKAD) show a composition bias toward basic and acidic residues. The disordered stretch occupies residues 46–100 (LHDDDRDLAEKADAQAGYQPMPPQVQQGQHPQQSPYPAPPQQQPVVDPVQRTRDS). Over residues 69-78 (QVQQGQHPQQ) the composition is skewed to low complexity.

The protein belongs to the TatA/E family. As to quaternary structure, the Tat system comprises two distinct complexes: a TatABC complex, containing multiple copies of TatA, TatB and TatC subunits, and a separate TatA complex, containing only TatA subunits. Substrates initially bind to the TatABC complex, which probably triggers association of the separate TatA complex to form the active translocon.

The protein localises to the cell membrane. Its function is as follows. Part of the twin-arginine translocation (Tat) system that transports large folded proteins containing a characteristic twin-arginine motif in their signal peptide across membranes. TatA could form the protein-conducting channel of the Tat system. The chain is Sec-independent protein translocase protein TatA from Salinispora tropica (strain ATCC BAA-916 / DSM 44818 / JCM 13857 / NBRC 105044 / CNB-440).